The following is a 306-amino-acid chain: Aspartate carbamoyltransferase catalytic subunit (306 aa).

Positions 54 and 55 each coordinate carbamoyl phosphate. K83 serves as a coordination point for L-aspartate. Carbamoyl phosphate-binding residues include R104, H132, and Q135. Residues R165 and R227 each coordinate L-aspartate. The carbamoyl phosphate site is built by L266 and P267.

Belongs to the aspartate/ornithine carbamoyltransferase superfamily. ATCase family. In terms of assembly, heterododecamer (2C3:3R2) of six catalytic PyrB chains organized as two trimers (C3), and six regulatory PyrI chains organized as three dimers (R2).

It catalyses the reaction carbamoyl phosphate + L-aspartate = N-carbamoyl-L-aspartate + phosphate + H(+). It participates in pyrimidine metabolism; UMP biosynthesis via de novo pathway; (S)-dihydroorotate from bicarbonate: step 2/3. In terms of biological role, catalyzes the condensation of carbamoyl phosphate and aspartate to form carbamoyl aspartate and inorganic phosphate, the committed step in the de novo pyrimidine nucleotide biosynthesis pathway. This Finegoldia magna (strain ATCC 29328 / DSM 20472 / WAL 2508) (Peptostreptococcus magnus) protein is Aspartate carbamoyltransferase catalytic subunit.